Here is a 219-residue protein sequence, read N- to C-terminus: 7-cyano-7-deazaguanine synthase (219 aa).

10–20 serves as a coordination point for ATP; the sequence is FSGGQDSTTCL. The Zn(2+) site is built by cysteine 186, cysteine 195, cysteine 198, and cysteine 201.

This sequence belongs to the QueC family. As to quaternary structure, homodimer. It depends on Zn(2+) as a cofactor.

The enzyme catalyses 7-carboxy-7-deazaguanine + NH4(+) + ATP = 7-cyano-7-deazaguanine + ADP + phosphate + H2O + H(+). It participates in purine metabolism; 7-cyano-7-deazaguanine biosynthesis. Its function is as follows. Catalyzes the ATP-dependent conversion of 7-carboxy-7-deazaguanine (CDG) to 7-cyano-7-deazaguanine (preQ(0)). This is 7-cyano-7-deazaguanine synthase from Bacillus licheniformis (strain ATCC 14580 / DSM 13 / JCM 2505 / CCUG 7422 / NBRC 12200 / NCIMB 9375 / NCTC 10341 / NRRL NRS-1264 / Gibson 46).